A 179-amino-acid polypeptide reads, in one-letter code: ATP synthase subunit delta (179 aa).

Belongs to the ATPase delta chain family. F-type ATPases have 2 components, F(1) - the catalytic core - and F(0) - the membrane proton channel. F(1) has five subunits: alpha(3), beta(3), gamma(1), delta(1), epsilon(1). F(0) has three main subunits: a(1), b(2) and c(10-14). The alpha and beta chains form an alternating ring which encloses part of the gamma chain. F(1) is attached to F(0) by a central stalk formed by the gamma and epsilon chains, while a peripheral stalk is formed by the delta and b chains.

Its subcellular location is the cell inner membrane. Its function is as follows. F(1)F(0) ATP synthase produces ATP from ADP in the presence of a proton or sodium gradient. F-type ATPases consist of two structural domains, F(1) containing the extramembraneous catalytic core and F(0) containing the membrane proton channel, linked together by a central stalk and a peripheral stalk. During catalysis, ATP synthesis in the catalytic domain of F(1) is coupled via a rotary mechanism of the central stalk subunits to proton translocation. Functionally, this protein is part of the stalk that links CF(0) to CF(1). It either transmits conformational changes from CF(0) to CF(1) or is implicated in proton conduction. The chain is ATP synthase subunit delta from Burkholderia orbicola (strain MC0-3).